The following is a 213-amino-acid chain: Pyrrolidone-carboxylate peptidase (213 aa).

Residues Glu78, Cys141, and His165 contribute to the active site.

This sequence belongs to the peptidase C15 family. Homotetramer.

It localises to the cytoplasm. It carries out the reaction Release of an N-terminal pyroglutamyl group from a polypeptide, the second amino acid generally not being Pro.. Removes 5-oxoproline from various penultimate amino acid residues except L-proline. This is Pyrrolidone-carboxylate peptidase from Clostridium botulinum (strain Alaska E43 / Type E3).